We begin with the raw amino-acid sequence, 442 residues long: Cell division protein FtsZ (442 aa).

Residues 18–22, 105–107, E136, R140, and D184 contribute to the GTP site; these read GGGVN and GTG. Over residues 329–341 the composition is skewed to low complexity; that stretch reads AAPAAEPVQQQVP. The segment at 329–442 is disordered; sequence AAPAAEPVQQ…DDLDVPSFLQ (114 aa). 2 stretches are compositionally biased toward basic and acidic residues: residues 349-362 and 390-431; these read PEKE…REEN and NDRD…RDDR.

It belongs to the FtsZ family. Homodimer. Polymerizes to form a dynamic ring structure in a strictly GTP-dependent manner. Interacts directly with several other division proteins.

It is found in the cytoplasm. Functionally, essential cell division protein that forms a contractile ring structure (Z ring) at the future cell division site. The regulation of the ring assembly controls the timing and the location of cell division. One of the functions of the FtsZ ring is to recruit other cell division proteins to the septum to produce a new cell wall between the dividing cells. Binds GTP and shows GTPase activity. The sequence is that of Cell division protein FtsZ from Corynebacterium glutamicum (strain ATCC 13032 / DSM 20300 / JCM 1318 / BCRC 11384 / CCUG 27702 / LMG 3730 / NBRC 12168 / NCIMB 10025 / NRRL B-2784 / 534).